Consider the following 241-residue polypeptide: MSDDDAPESLRGAADGPAWRNFYGRRSGKTLRPSQKVYLSEDLGRLRPEGITREENPERRPLDLGALFGGRPVWLEIGFGGGEHMVHMAARNPGIGLIGCEPFVNGVAMLLGKIRAAGVENLLVHPGDVRDLFDVLPEASVSKAFLNYPDPWPKKRHHRRRFVTQGYLGPLARVLAPGATFRVATDIPDYVRQTLEEVPQAGFDLVSESGEAWEDWLSTRYEQKALREGRVPHYMTFRRQG.

4 residues coordinate S-adenosyl-L-methionine: glutamate 76, glutamate 101, aspartate 128, and aspartate 150. Aspartate 150 is an active-site residue. Residues lysine 154, aspartate 186, and 219–222 each bind substrate; that span reads TRYE.

This sequence belongs to the class I-like SAM-binding methyltransferase superfamily. TrmB family.

It carries out the reaction guanosine(46) in tRNA + S-adenosyl-L-methionine = N(7)-methylguanosine(46) in tRNA + S-adenosyl-L-homocysteine. Its pathway is tRNA modification; N(7)-methylguanine-tRNA biosynthesis. Functionally, catalyzes the formation of N(7)-methylguanine at position 46 (m7G46) in tRNA. In Cereibacter sphaeroides (strain ATCC 17023 / DSM 158 / JCM 6121 / CCUG 31486 / LMG 2827 / NBRC 12203 / NCIMB 8253 / ATH 2.4.1.) (Rhodobacter sphaeroides), this protein is tRNA (guanine-N(7)-)-methyltransferase.